The primary structure comprises 1137 residues: UDP-N-acetylglucosamine transferase subunit ALG13 (1137 aa).

The interval 1 to 125 (MKCVFVTVGT…LHKEGHLFYC (125 aa)) is glycosyltransferase activity. The interval 126–400 (TCRVLTCPGQ…GSKKNRNNAV (275 aa)) is deubiquitinase activity. Residues 231-352 (LFRKLTAKDA…SGHYDSVYSK (122 aa)) form the OTU domain. Asp-239 acts as the For deubiquitinase activity in catalysis. Cys-242 functions as the Nucleophile; for deubiquitinase activity in the catalytic mechanism. Residue His-345 is the For deubiquitinase activity of the active site. A Tudor domain is found at 492–552 (QYYLGDKCQV…KPVTQVMSVP (61 aa)). Disordered stretches follow at residues 641–660 (HFHPQHPSPRQGRGYGMPRN) and 911–974 (IPHA…SGSD). Composition is skewed to pro residues over residues 918 to 946 (LPPPPPPPPPPPPPPPPPPPPPPPPPPPA) and 956 to 967 (QPPPPLPPPPYS).

Belongs to the glycosyltransferase 28 family. Forms with ALG14 the active heterodimeric UDP-N-acetylglucosamine transferase complex. In terms of assembly, not able to interact with ALG14 to form an active UDP-N-acetylglucosamine transferase complex.

It is found in the endoplasmic reticulum membrane. It carries out the reaction an N-acetyl-alpha-D-glucosaminyl-diphospho-di-trans,poly-cis-dolichol + UDP-N-acetyl-alpha-D-glucosamine = an N,N'-diacetylchitobiosyl-diphospho-di-trans,poly-cis-dolichol + UDP + H(+). The protein operates within protein modification; protein glycosylation. Functionally, catalytic subunit of the UDP-N-acetylglucosamine transferase complex that operates in the biosynthetic pathway of dolichol-linked oligosaccharides, the glycan precursors employed in protein asparagine (N)-glycosylation. The assembly of dolichol-linked oligosaccharides begins on the cytosolic side of the endoplasmic reticulum membrane and finishes in its lumen. The sequential addition of sugars to dolichol pyrophosphate produces dolichol-linked oligosaccharides containing fourteen sugars, including two GlcNAcs, nine mannoses and three glucoses. Once assembled, the oligosaccharide is transferred from the lipid to nascent proteins by oligosaccharyltransferases. On the cytoplasmic face of the endoplasmic reticulum, the dimeric ALG13/ALG14 complex catalyzes the second step of dolichol pyrophosphate biosynthesis, transferring a beta1,4-linked N-acetylglucosamine (GlcNAc) from UDP-GlcNAc to GlcNAc-pyrophosphatedolichol (Gn-PDol) to produce N,N'-diacetylchitobiosyl diphosphodolichol. N,N'-diacetylchitobiosyl diphosphodolichol is a substrate for ALG1, the following enzyme in the biosynthetic pathway. In terms of biological role, no glycosyltransferase or deubiquitinase activity is detected for this potential multifunctional enzyme. The polypeptide is UDP-N-acetylglucosamine transferase subunit ALG13 (Homo sapiens (Human)).